The sequence spans 91 residues: uncharacterized protein (91 aa).

Residues Asn71–Glu91 form a disordered region. The segment covering Ser76 to Glu91 has biased composition (polar residues).

This is an uncharacterized protein from Bacillus subtilis (strain 168).